The primary structure comprises 103 residues: Protein Rev (103 aa).

Serine 5 is modified (phosphoserine; by host CK2). Residues 17–25 (IIKILYQSN) form a homomultimerization region. Disordered stretches follow at residues 24–49 (SNPC…RRQA) and 82–103 (IRDP…TKDN). A Nuclear localization signal and RNA-binding (RRE) motif is present at residues 33 to 49 (SRNARKNRRRRWRRRQA). The span at 35–48 (NARKNRRRRWRRRQ) shows a compositional bias: basic residues. The Nuclear export signal and binding to XPO1 motif lies at 72-83 (VDLPPLEQLNIR).

The protein belongs to the HIV-1 REV protein family. In terms of assembly, homomultimer; when bound to the RRE. Multimeric assembly is essential for activity and may involve XPO1. Binds to human KPNB1, XPO1, TNPO1, RANBP5 and IPO7. Interacts with the viral Integrase. Interacts with human KHDRBS1. Interacts with human NAP1; this interaction decreases Rev multimerization and stimulates its activity. Interacts with human DEAD-box helicases DDX3 and DDX24; these interactions may serve for viral RNA export to the cytoplasm and packaging, respectively. Interacts with human PSIP1; this interaction may inhibit HIV-1 DNA integration by promoting dissociation of the Integrase-LEDGF/p75 complex. In terms of processing, asymmetrically arginine dimethylated at one site by host PRMT6. Methylation impairs the RNA-binding activity and export of viral RNA from the nucleus to the cytoplasm. Post-translationally, phosphorylated by protein kinase CK2. Presence of, and maybe binding to the N-terminus of the regulatory beta subunit of CK2 is necessary for CK2-mediated Rev's phosphorylation.

The protein localises to the host nucleus. The protein resides in the host nucleolus. It localises to the host cytoplasm. Escorts unspliced or incompletely spliced viral pre-mRNAs (late transcripts) out of the nucleus of infected cells. These pre-mRNAs carry a recognition sequence called Rev responsive element (RRE) located in the env gene, that is not present in fully spliced viral mRNAs (early transcripts). This function is essential since most viral proteins are translated from unspliced or partially spliced pre-mRNAs which cannot exit the nucleus by the pathway used by fully processed cellular mRNAs. Rev itself is translated from a fully spliced mRNA that readily exits the nucleus. Rev's nuclear localization signal (NLS) binds directly to KPNB1/Importin beta-1 without previous binding to KPNA1/Importin alpha-1. KPNB1 binds to the GDP bound form of RAN (Ran-GDP) and targets Rev to the nucleus. In the nucleus, the conversion from Ran-GDP to Ran-GTP dissociates Rev from KPNB1 and allows Rev's binding to the RRE in viral pre-mRNAs. Rev multimerization on the RRE via cooperative assembly exposes its nuclear export signal (NES) to the surface. Rev can then form a complex with XPO1/CRM1 and Ran-GTP, leading to nuclear export of the complex. Conversion from Ran-GTP to Ran-GDP mediates dissociation of the Rev/RRE/XPO1/RAN complex, so that Rev can return to the nucleus for a subsequent round of export. Beside KPNB1, also seems to interact with TNPO1/Transportin-1, RANBP5/IPO5 and IPO7/RANBP7 for nuclear import. The nucleoporin-like HRB/RIP is an essential cofactor that probably indirectly interacts with Rev to release HIV RNAs from the perinuclear region to the cytoplasm. The polypeptide is Protein Rev (Human immunodeficiency virus type 1 group O (isolate MVP5180) (HIV-1)).